A 326-amino-acid chain; its full sequence is Ribosome biogenesis protein BRX1 homolog (326 aa).

Over residues 1–17 (MVKPSKILEKIKKRTEP) the composition is skewed to basic and acidic residues. The disordered stretch occupies residues 1 to 66 (MVKPSKILEK…EENKNIEENK (66 aa)). Acidic residues predominate over residues 22-57 (VVEEESDEEIIEQEGSEEEEEIVEEESEEEEEEVEE). Positions 75–268 (KRVLFTSTRG…IDKIFSDGFG (194 aa)) constitute a Brix domain.

The protein belongs to the BRX1 family.

The protein resides in the nucleus. Its subcellular location is the nucleolus. Functionally, required for biogenesis of the 60S ribosomal subunit. The sequence is that of Ribosome biogenesis protein BRX1 homolog (bxdc2) from Dictyostelium discoideum (Social amoeba).